Reading from the N-terminus, the 142-residue chain is Large ribosomal subunit protein mL43 (142 aa).

Belongs to the mitochondrion-specific ribosomal protein mL43 family. In terms of assembly, component of the mitochondrial large ribosomal subunit. Mature mitochondrial ribosomes consist of a small (37S) and a large (54S) subunit. The 37S subunit contains at least 33 different proteins and 1 molecule of RNA (15S). The 54S subunit contains at least 45 different proteins and 1 molecule of RNA (21S).

The protein resides in the mitochondrion. The chain is Large ribosomal subunit protein mL43 (MRPL51) from Eremothecium gossypii (strain ATCC 10895 / CBS 109.51 / FGSC 9923 / NRRL Y-1056) (Yeast).